Here is a 1207-residue protein sequence, read N- to C-terminus: Plasma membrane calcium-transporting ATPase 4 (1207 aa).

Over 1-100 (MTNPTEHTLP…KTFLELVWEA (100 aa)) the chain is Cytoplasmic. Position 13 is a phosphoserine (S13). The helical transmembrane segment at 101 to 121 (LQDVTLIILEIAAIISLVLSF) threads the bilayer. The Extracellular portion of the chain corresponds to 122–147 (YRPPGGENEQCGLAVTSPEDEGEAEA). Residues 148-168 (GWIEGAAILFSVIIVVLVTAF) form a helical membrane-spanning segment. Topologically, residues 169-368 (NDWSKEKQFR…LAVQIGKAGL (200 aa)) are cytoplasmic. The tract at residues 294–317 (EEEKKKKGKKQGVPENRNKAKTQD) is disordered. Phosphoserine is present on residues S328 and S334. A helical transmembrane segment spans residues 369–389 (IMSAITVLILILYFVIDNFVI). At 390–408 (QRRPWLAECTPIYVQYFVK) the chain is on the extracellular side. A helical membrane pass occupies residues 409 to 429 (FFIIGVTVLVVAVPEGLPLAV). The Cytoplasmic portion of the chain corresponds to 430 to 843 (TISLAYSVKK…RNVYDSISKF (414 aa)). D465 (4-aspartylphosphate intermediate) is an active-site residue. Mg(2+) contacts are provided by D785 and D789. The helical transmembrane segment at 844 to 864 (LQFQLTVNVVAVIVAFTGACI) threads the bilayer. The Extracellular portion of the chain corresponds to 865–871 (TQDSPLK). A helical transmembrane segment spans residues 872–892 (AVQMLWVNLIMDTFASLALAT). At 893–918 (EPPTDSLLKRRPYGRNKPLISRTMMK) the chain is on the cytoplasmic side. Residues 919-939 (NILGHAVYQLTVIFFLVFAGE) traverse the membrane as a helical segment. Residues 940–957 (KFFDIDSGRRAPLHSPPS) are Extracellular-facing. The helical transmembrane segment at 958-977 (QHYTIIFNTFVLMQLFNEIN) threads the bilayer. Over 978 to 994 (SRKIHGERNVFSGIFRN) the chain is Cytoplasmic. A helical membrane pass occupies residues 995 to 1015 (LIFCSVVLGTFISQIIIVEFG). Topologically, residues 1016-1028 (GKPFSCTKLTLSQ) are extracellular. The chain crosses the membrane as a helical span at residues 1029-1049 (WFWCLFIGIGELLWGQVISTI). At 1050–1207 (PTQSLKFLKE…SPLHSLETSV (158 aa)) the chain is on the cytoplasmic side. The interval 1086 to 1103 (LRRGQILWFRGLNRIQTQ) is calmodulin-binding subdomain A. A Phosphothreonine; by PKC modification is found at T1102. The segment at 1104–1113 (IKVVKAFHSS) is calmodulin-binding subdomain B. The disordered stretch occupies residues 1159-1181 (VSKPGTKTSSLDGEVTPQTNKNN). The span at 1163-1181 (GTKTSSLDGEVTPQTNKNN) shows a compositional bias: polar residues.

It belongs to the cation transport ATPase (P-type) (TC 3.A.3) family. Type IIB subfamily. Interacts with PDZD11. Interacts with SLC35G1 and STIM1. Interacts with calmodulin. Isoform 1 is detected in brain, heart, liver, testis and epididymis. Isoform 2 is detected in brain (at protein level), heart, seminal vesicle and epididymis. There is a shift in expression from isoform 1 to isoform 2 along the length of the epididymis from caput to cauda (at protein level).

Its subcellular location is the cell membrane. It localises to the cell projection. The protein resides in the cilium. The protein localises to the flagellum membrane. It catalyses the reaction Ca(2+)(in) + ATP + H2O = Ca(2+)(out) + ADP + phosphate + H(+). With respect to regulation, activated by calcium/calmodulin. Its function is as follows. Calcium/calmodulin-regulated and magnesium-dependent enzyme that catalyzes the hydrolysis of ATP coupled with the transport of calcium out of the cell. By regulating sperm cells calcium homeostasis, may play a role in sperm motility. This is Plasma membrane calcium-transporting ATPase 4 from Bos taurus (Bovine).